A 646-amino-acid polypeptide reads, in one-letter code: Peptidylprolyl isomerase domain and WD repeat-containing protein 1 (646 aa).

A disordered region spans residues 1 to 30; it reads MAAESGSDFQQRRRRRRDPEEPEKTELSER. The residue at position 2 (Ala-2) is an N-acetylalanine. Residues 17–30 are compositionally biased toward basic and acidic residues; it reads RDPEEPEKTELSER. WD repeat units follow at residues 88-126, 131-170, 221-260, and 278-319; these read MHRD…IEFV, SHLG…MINM, LHTS…YKFP, and KCKA…RVFD. The span at 455-478 shows a compositional bias: basic and acidic residues; it reads EPEDTKSADSDRDVFNEKPSKEEV. Residues 455–490 form a disordered region; the sequence is EPEDTKSADSDRDVFNEKPSKEEVMAATQAEGPKRV. In terms of domain architecture, PPIase cyclophilin-type spans 490-645; it reads VSDSAIIHTS…EDVSIINITV (156 aa).

The protein belongs to the cyclophilin-type PPIase family. PPIL1 subfamily. As to quaternary structure, identified in the spliceosome C complex.

Its subcellular location is the nucleus. It carries out the reaction [protein]-peptidylproline (omega=180) = [protein]-peptidylproline (omega=0). Its activity is regulated as follows. Inhibited by cyclosporin A (CsA). PPIase that catalyzes the cis-trans isomerization of proline imidic peptide bonds in oligopeptides and may therefore assist protein folding. May be involved in pre-mRNA splicing. The polypeptide is Peptidylprolyl isomerase domain and WD repeat-containing protein 1 (Pongo abelii (Sumatran orangutan)).